We begin with the raw amino-acid sequence, 117 residues long: UPF0102 protein FTF0898c (117 aa).

It belongs to the UPF0102 family.

The chain is UPF0102 protein FTF0898c from Francisella tularensis subsp. tularensis (strain FSC 198).